The primary structure comprises 593 residues: Arylsulfatase D (593 aa).

A signal peptide spans 1–33; sequence MRSAARRGRAAPAARDSLPVLLFLCLLLKTCEP. Residues Asp49 and Asp50 each coordinate Ca(2+). Residue Asn61 is glycosylated (N-linked (GlcNAc...) asparagine). Cys89 contacts Ca(2+). Cys89 acts as the Nucleophile in catalysis. Cys89 bears the 3-oxoalanine (Cys) mark. Asn128 carries an N-linked (GlcNAc...) asparagine glycan. Lys148 is a substrate binding site. The active site involves His150. His304 contributes to the substrate binding site. An N-linked (GlcNAc...) asparagine glycan is attached at Asn347. Positions 356 and 357 each coordinate Ca(2+). Position 381 (Lys381) interacts with substrate.

It belongs to the sulfatase family. The cofactor is Ca(2+). In terms of processing, the conversion to 3-oxoalanine (also known as C-formylglycine, FGly), of a serine or cysteine residue in prokaryotes and of a cysteine residue in eukaryotes, is critical for catalytic activity. Expressed in the pancreas, kidney, liver, lung, placenta, brain and heart.

The protein resides in the lysosome. The polypeptide is Arylsulfatase D (ARSD) (Homo sapiens (Human)).